The chain runs to 1331 residues: MYGFNIGKAENAGLHLDNKKSENNNSSNNELHKVINTINNGFQFKDDDDEDNENNLNNESSSDEENQQQQNNNNNNNKNQFEDDDEDQEEEEYISGDDLNNNGQESDDYEEEEEDDDEDEEEEDEESKKLNYDSFFGANMSHNMDFLNSQNINSQIGLMDPHLHSSQLNFEEPQEEIELPAHACAYCATHELSTVVKCMHPSCGKWFCNGKGKTKSSHIITHLVKSKHKEVALHPESSFGDTTLECFNCGCKNIFLLGFITARTESVVVLLCRDPCASGPSKEVNWDMSSWQPLINGGEKAFCSWLVKTPSQVDSERSRQITIQQILRLEEFWKMDPEATLLDIEAPRSDDEKPASTQLAYKDAYEYREIISPLIELEAKHEKELRESLSQSGISIEWSQGINKRYTATFPFSRSDLEFKVVPGDELKLQFISSTGGVIEWEDTGRVIHIDDENLLSLETKSRCSFDSGPKGSYRMEMVWRSTSSERILSAMKSFAIKEQALSSYLYHALLGHPDIPPAPLDIQLPTNFHLKNLPRLNESQISAVNKVLTAPLSLIQGPPGTGKTVISSFIIHHLVKYVKGNDKVLVCTPSNVAIDQLTGKLHEIGLKVVRLSSKLREEVASPVEHLTLHKQVYKLDQMGDGELGKLRKLKEAFGSLSNEDEKRYIYLRRMMEMAILRKADVICATCVGAGDPRLSQFRFPHILIDESTQASEPECLIPLMMGAKQVILVGDHRQLGPVLLCKKVVDAGLSQSLFERLISLGHHPERLTIQYRMHPSLTEFPSNTSYEGQLVSELSHTDRDSQSKFPWPQPKDPMFFFNCTGSEEISSSGTSFINTTEASICEKIVTKFLELGSLPGQIGIITPYEGQRAYITSHMQKSGKLNLELYKSIEVASVDSFQGREKDYIILSCVRSNDYQGIGFLQDPRRLNVALTRARFGLIILGNAKVLSKDPLWNSLISHFKNKNVLVEGSLANLKQSPVILQKPKKLYGQGKLPIPGQNSNSFNYDREHIDPNIGMNMVYGISNNNINNNSNNINNNNNNNINNNINNNNNQRFNTQDGRYSNSQTSSSSQTYYGSTNSSGNTINSNQNQFFNTPSSYSANTGSSYQYRFQQYQQLQQPQPQQQQQPQQQQQPQQQQQPQQPQQQQPQQQKQYQQQQQQQQQQQQQQQQQQQQQKQQPHQQYQSQKQQQQQQYQQPQQYQQQNQQYHQSQLPPKQYHNQRFNNNNNNNINNNNNNNNNNNNNNNNNNNNNNINNNNSKNQNQNQSPRRSPVVGTLQLHCKFDSQPNNNKHISDPNQPQISNPNMSIPLSQSLSFNDLSQEQFNKSNSRKD.

A disordered region spans residues 1–129 (MYGFNIGKAE…EEEEDEESKK (129 aa)). Positions 54 to 131 (NNLNNESSSD…EEDEESKKLN (78 aa)) form a coiled coil. Over residues 67-79 (QQQQNNNNNNNKN) the composition is skewed to low complexity. Acidic residues-rich tracts occupy residues 82–95 (EDDD…EYIS) and 105–125 (ESDD…EEDE). In terms of domain architecture, Upf1 CH-rich spans 176-336 (EIELPAHACA…LRLEEFWKMD (161 aa)). Positions 184, 187, 198, 203, 208, 218, 222, 228, 246, 249, 272, and 276 each coordinate Zn(2+). The tract at residues 184–218 (CAYCATHELSTVVKCMHPSCGKWFCNGKGKTKSSH) is C3H. A CC/SHH/C region spans residues 198-228 (CMHPSCGKWFCNGKGKTKSSHIITHLVKSKH). The interval 246-276 (CFNCGCKNIFLLGFITARTESVVVLLCRDPC) is C4. ATP contacts are provided by residues Gln541, 558–565 (GPPGTGKT), Gln735, Tyr772, and Glu902. Low complexity-rich tracts occupy residues 1032 to 1052 (SNNI…NNNN) and 1062 to 1091 (YSNS…NQNQ). The segment at 1032 to 1150 (SNNINNNNNN…QQPQQQQPQQ (119 aa)) is disordered. The span at 1092 to 1111 (FFNTPSSYSANTGSSYQYRF) shows a compositional bias: polar residues. Positions 1112–1150 (QQYQQLQQPQPQQQQQPQQQQQPQQQQQPQQPQQQQPQQ) are enriched in low complexity. Residues 1149-1178 (QQQKQYQQQQQQQQQQQQQQQQQQQQQKQQ) adopt a coiled-coil conformation. 2 consecutive short sequence motifs ([ST]-Q motif) follow at residues 1174 to 1175 (QQ) and 1189 to 1190 (QQ). 2 stretches are compositionally biased toward low complexity: residues 1180 to 1214 (HQQY…QLPP) and 1223 to 1257 (NNNN…NNNN). A disordered region spans residues 1180–1310 (HQQYQSQKQQ…SNPNMSIPLS (131 aa)). Polar residues-rich tracts occupy residues 1258-1268 (SKNQNQNQSPR) and 1284-1310 (SQPN…IPLS).

The protein belongs to the DNA2/NAM7 helicase family. In terms of processing, phosphorylated probably by smg1.

The protein localises to the cytoplasm. The catalysed reaction is ATP + H2O = ADP + phosphate + H(+). In terms of biological role, RNA-dependent helicase required for nonsense-mediated decay (NMD) of aberrant mRNAs containing premature stop codons and modulates the expression level of normal mRNAs. The formation of a surveillance complex is believed to activate NMD. This chain is Regulator of nonsense transcripts 1 (upf1), found in Dictyostelium discoideum (Social amoeba).